A 319-amino-acid polypeptide reads, in one-letter code: tRNA N6-adenosine threonylcarbamoyltransferase (319 aa).

Fe cation-binding residues include His-110 and His-114. Substrate-binding positions include 132-136, Asp-165, Gly-178, Asp-182, and Asn-271; that span reads VVSGG. Asp-300 lines the Fe cation pocket.

Belongs to the KAE1 / TsaD family. Requires Fe(2+) as cofactor.

It is found in the cytoplasm. The enzyme catalyses L-threonylcarbamoyladenylate + adenosine(37) in tRNA = N(6)-L-threonylcarbamoyladenosine(37) in tRNA + AMP + H(+). Required for the formation of a threonylcarbamoyl group on adenosine at position 37 (t(6)A37) in tRNAs that read codons beginning with adenine. Is involved in the transfer of the threonylcarbamoyl moiety of threonylcarbamoyl-AMP (TC-AMP) to the N6 group of A37, together with TsaE and TsaB. TsaD likely plays a direct catalytic role in this reaction. The chain is tRNA N6-adenosine threonylcarbamoyltransferase from Mycoplasma capricolum subsp. capricolum (strain California kid / ATCC 27343 / NCTC 10154).